Reading from the N-terminus, the 271-residue chain is Short-chain dehydrogenase ptmH (271 aa).

NADP(+) contacts are provided by I8, T34, K40, D56, N84, Y148, K152, V181, and T183. Residue Y148 is the Proton acceptor of the active site. K152 serves as the catalytic Lowers pKa of active site Tyr.

Belongs to the short-chain dehydrogenases/reductases (SDR) family.

The protein operates within secondary metabolite biosynthesis. Functionally, short-chain dehydrogenase; part of the gene cluster that mediates the biosynthesis of the indole diterpenes penitrems. The geranylgeranyl diphosphate (GGPP) synthase ptmG catalyzes the first step in penitrem biosynthesis via conversion of farnesyl pyrophosphate and isopentyl pyrophosphate into geranylgeranyl pyrophosphate (GGPP). Condensation of indole-3-glycerol phosphate with GGPP by the prenyl transferase ptmC then forms 3-geranylgeranylindole (3-GGI). Epoxidation by the FAD-dependent monooxygenase ptmM leads to a epoxidized-GGI that is substrate of the terpene cyclase ptmB for cyclization to yield paspaline. Paspaline is subsequently converted to 13-desoxypaxilline by the cytochrome P450 monooxygenase ptmP, the latter being then converted to paxilline by the cytochrome P450 monooxygenase ptmQ. Paxilline is converted to beta-paxitriol via C-10 ketoreduction by the short-chain dehydrogenase ptmH which can be monoprenylated at the C-20 by the indole diterpene prenyltransferase ptmD. A two-step elimination (acetylation and elimination) process performed by the O-acetyltransferase ptmV and ptmI leads to the production of the prenylated form of penijanthine. The FAD-linked oxidoreductase ptmO then converts the prenylated form of penijanthine into PC-M5 which is in turn transformed into PC-M4 by the aromatic dimethylallyltransferase ptmE. Five sequential oxidative transformations performed by the cytochrome P450 monooxygenases ptmK, ptmU, ptmL, ptmN and ptmJ yield the various penitrem compounds. PtmK, ptmU and ptmM are involved in the formation of the key bicyclic ring of penitrem C via the formation of the intermediates secopenitrem D and penitrem D. PtmL catalyzes the epoxidation of penitrem D and C to yield penitrem B and F, respectively. PtmJ catalyzes the last benzylic hydroxylation to convert penitrem B to prenitrem E and penitrem F to penitrem A. This chain is Short-chain dehydrogenase ptmH, found in Penicillium ochrochloron.